The primary structure comprises 343 residues: Polyprenal reductase 2 (343 aa).

A run of 6 helical transmembrane segments spans residues 12–32 (GAWI…SIPT), 66–86 (FAHF…ATWM), 164–184 (MHIL…LSLC), 223–243 (PLMK…WGWI), 266–286 (IIPY…AEIV), and 291–311 (LLIA…FVAA).

This sequence belongs to the steroid 5-alpha reductase family. Polyprenal reductase subfamily. In terms of tissue distribution, expressed in roots, leaves, stems and flowers.

Its subcellular location is the endoplasmic reticulum membrane. It carries out the reaction a di-trans,poly-cis-dolichal + NADP(+) = a di-trans,poly-cis-polyprenal + NADPH + H(+). It participates in protein modification; protein glycosylation. Its function is as follows. Plays a key role in early steps of protein N-linked glycosylation by being involved in the conversion of polyprenol into dolichol. Acts as a polyprenal reductase that mediates the reduction of polyprenal into dolichal in a NADP-dependent mechanism. Dolichols are required for the synthesis of dolichol-linked monosaccharides and the oligosaccharide precursor used for N-glycosylation. Involved in the regulation of plant growth and reproductive processes. This chain is Polyprenal reductase 2, found in Arabidopsis thaliana (Mouse-ear cress).